The following is a 288-amino-acid chain: Eukaryotic translation initiation factor 3 subunit F-2 (288 aa).

The MPN domain occupies 12-149 (VLLHPLVLFQ…TRIFCAVATG (138 aa)).

The protein belongs to the eIF-3 subunit F family. Component of the eukaryotic translation initiation factor 3 (eIF-3) complex. The eIF-3 complex interacts with pix.

It is found in the cytoplasm. Its function is as follows. Component of the eukaryotic translation initiation factor 3 (eIF-3) complex, which is involved in protein synthesis of a specialized repertoire of mRNAs and, together with other initiation factors, stimulates binding of mRNA and methionyl-tRNAi to the 40S ribosome. The eIF-3 complex specifically targets and initiates translation of a subset of mRNAs involved in cell proliferation. This chain is Eukaryotic translation initiation factor 3 subunit F-2, found in Drosophila pseudoobscura pseudoobscura (Fruit fly).